Here is a 271-residue protein sequence, read N- to C-terminus: MEFWQHIYSNFNVIAFSIFGLKVHWYGIMYVIALLLALLLAKFFVRKFQLDINEKHLDSYFIWVEIGVILGARLGYILIYDANTMYYITHPWQIFNPYINGEFVGIRGMSYHGAIIGFLIATLLFCKKYKTNPWIFLDLVALSVPLAYVFGRIGNFLNQELFGRITNVPWGIYVDGVLRHPSQLYEAFLEGIVVFIIVYLARFKQSFQGELILVYAGAYSLARFICEFYREPDFGIGFVLWGMSMGQILSFIMFITALLVYICIKFKKVNI.

7 helical membrane-spanning segments follow: residues 25 to 45 (WYGIMYVIALLLALLLAKFFV), 60 to 80 (YFIWVEIGVILGARLGYILIY), 103 to 123 (FVGIRGMSYHGAIIGFLIATL), 134 to 154 (WIFLDLVALSVPLAYVFGRIG), 181 to 201 (PSQLYEAFLEGIVVFIIVYLA), 209 to 229 (GELILVYAGAYSLARFICEFY), and 235 to 255 (GIGFVLWGMSMGQILSFIMFI). Arginine 152 is an a 1,2-diacyl-sn-glycero-3-phospho-(1'-sn-glycerol) binding site.

The protein belongs to the Lgt family.

It localises to the cell inner membrane. It carries out the reaction L-cysteinyl-[prolipoprotein] + a 1,2-diacyl-sn-glycero-3-phospho-(1'-sn-glycerol) = an S-1,2-diacyl-sn-glyceryl-L-cysteinyl-[prolipoprotein] + sn-glycerol 1-phosphate + H(+). It participates in protein modification; lipoprotein biosynthesis (diacylglyceryl transfer). In terms of biological role, catalyzes the transfer of the diacylglyceryl group from phosphatidylglycerol to the sulfhydryl group of the N-terminal cysteine of a prolipoprotein, the first step in the formation of mature lipoproteins. The protein is Phosphatidylglycerol--prolipoprotein diacylglyceryl transferase of Campylobacter jejuni subsp. jejuni serotype O:6 (strain 81116 / NCTC 11828).